A 465-amino-acid chain; its full sequence is A-type ATP synthase subunit B (465 aa).

Belongs to the ATPase alpha/beta chains family. In terms of assembly, has multiple subunits with at least A(3), B(3), C, D, E, F, H, I and proteolipid K(x).

The protein localises to the cell membrane. Functionally, component of the A-type ATP synthase that produces ATP from ADP in the presence of a proton gradient across the membrane. The B chain is a regulatory subunit. In Sulfurisphaera tokodaii (strain DSM 16993 / JCM 10545 / NBRC 100140 / 7) (Sulfolobus tokodaii), this protein is A-type ATP synthase subunit B.